The primary structure comprises 261 residues: Chanoclavine-I dehydrogenase ifgE (261 aa).

A signal peptide spans 1-20 (MASVKSRVFAITGGASGIGA). NADP(+) is bound by residues Ile18, Lys48, Asp66, Arg132, Tyr166, Lys170, and Thr201. The Proton acceptor role is filled by Tyr166. The active-site Lowers pKa of active site Tyr is Lys170.

Belongs to the short-chain dehydrogenases/reductases (SDR) family.

It functions in the pathway alkaloid biosynthesis; ergot alkaloid biosynthesis. Its function is as follows. Chanoclavine-I dehydrogenase; part of the gene cluster that mediates the biosynthesis of isofumigaclavines, fungal ergot alkaloids. The tryptophan dimethylallyltransferase ifgA catalyzes the first step of ergot alkaloid biosynthesis by condensing dimethylallyl diphosphate (DMAP) and tryptophan to form 4-dimethylallyl-L-tryptophan. The second step is catalyzed by the methyltransferase ifgB that methylates 4-dimethylallyl-L-tryptophan in the presence of S-adenosyl-L-methionine, resulting in the formation of N-methyl-dimethylallyl-L-tryptophan. The catalase ifgD and the FAD-dependent oxidoreductase ifgC then transform N-methyl-dimethylallyl-L-tryptophan to chanoclavine-I which is further oxidized by ifgE in the presence of NAD(+), resulting in the formation of chanoclavine-I aldehyde. The chanoclavine-I aldehyde reductases ifgG and/or fgaOx3 reduce chanoclavine-I aldehyde to dihydrochanoclavine-I aldehyde that spontaneously dehydrates to form 6,8-dimethyl-6,7-didehydroergoline. The festuclavine dehydrogenases ifgF1 and/or ifgF2 then catalyze the reduction of 6,8-dimethyl-6,7-didehydroergoline to form festuclavine. Hydrolysis of festuclavine by a yet undetermined cytochrome P450 monooxygenase (called ifgH) then leads to the formation of isofumigaclavine B which is in turn acetylated by ifgI to isofumigaclavine A. Penicillium roqueforti has interestingly at least two sets of genes for the consumption of chanoclavine-I aldehyde on three different loci, the OYEs ifgG/fgaOx3 and the festuclavine synthase homologs ifgF1/ifgF2. The reason for the duplication of these genes is unclear, probably to ensure the conversion of chanoclavine-I aldehyde by differential gene expression under various environmental conditions. In Penicillium roqueforti (strain FM164), this protein is Chanoclavine-I dehydrogenase ifgE.